The chain runs to 358 residues: Mitogen-activated protein kinase hog-1 (358 aa).

Residues 20-299 (YSDLQPVGMG…ATEALSHEYL (280 aa)) enclose the Protein kinase domain. ATP contacts are provided by residues 26–34 (VGMGAFGLV) and Lys49. Residue Asp141 is the Proton acceptor of the active site. Position 171 is a phosphothreonine (Thr171). The TXY motif lies at 171–173 (TGY). At Tyr173 the chain carries Phosphotyrosine.

It belongs to the protein kinase superfamily. Ser/Thr protein kinase family. MAP kinase subfamily. HOG1 sub-subfamily. Mg(2+) is required as a cofactor. Dually phosphorylated on Thr-171 and Tyr-173, which activates the enzyme. Phosphorylation is induced by fungicides and osmotic stress.

It is found in the cytoplasm. It localises to the nucleus. It catalyses the reaction L-seryl-[protein] + ATP = O-phospho-L-seryl-[protein] + ADP + H(+). The enzyme catalyses L-threonyl-[protein] + ATP = O-phospho-L-threonyl-[protein] + ADP + H(+). Its activity is regulated as follows. Activated by tyrosine and threonine phosphorylation. Functionally, proline-directed serine/threonine-protein kinase involved in a signal transduction pathway that is activated by changes in the osmolarity of the extracellular environment. Controls osmotic regulation of transcription of target genes. Involved in ion flux-mediated turgor regulation. This Neurospora crassa (strain ATCC 24698 / 74-OR23-1A / CBS 708.71 / DSM 1257 / FGSC 987) protein is Mitogen-activated protein kinase hog-1 (hog-1).